The chain runs to 46 residues: KSCCPTTAARNQYNICRLPGTPRPVCAALSGCKIISGTGCPPGYRH.

3 disulfides stabilise this stretch: Cys-3–Cys-40, Cys-4–Cys-32, and Cys-16–Cys-26.

This sequence belongs to the plant thionin (TC 1.C.44) family.

It is found in the secreted. In terms of biological role, thionins are small plant proteins which are toxic to animal cells. They seem to exert their toxic effect at the level of the cell membrane. Their precise function is not known. This is Denclatoxin-B from Dendrophthora clavata (Columbian mistletoe).